We begin with the raw amino-acid sequence, 355 residues long: Probable poly-beta-1,6-N-acetyl-D-glucosamine export protein (355 aa).

The next 10 membrane-spanning stretches (helical) occupy residues 13 to 30 (AFIC…QITL), 45 to 67 (YIRN…LTTL), 74 to 96 (INYL…LFYS), 116 to 138 (VLGQ…SYII), 145 to 167 (LFNS…HYFL), 187 to 204 (MILG…IGYN), 211 to 233 (FLEK…FIAV), 243 to 262 (SFTY…LLGV), 269 to 291 (MLLN…HPII), and 306 to 328 (TIVF…GMML).

It belongs to the acyltransferase 3 family.

It localises to the cell membrane. In terms of biological role, presumably involved in the export of the biofilm adhesin polysaccharide poly-beta-1,6-N-acetyl-D-glucosamine (PNAG, also referred to as PIA) across the cell membrane. The polypeptide is Probable poly-beta-1,6-N-acetyl-D-glucosamine export protein (icaC) (Staphylococcus epidermidis).